Reading from the N-terminus, the 330-residue chain is Ribosomal RNA large subunit methyltransferase F (330 aa).

The protein belongs to the methyltransferase superfamily. METTL16/RlmF family.

Its subcellular location is the cytoplasm. The enzyme catalyses adenosine(1618) in 23S rRNA + S-adenosyl-L-methionine = N(6)-methyladenosine(1618) in 23S rRNA + S-adenosyl-L-homocysteine + H(+). In terms of biological role, specifically methylates the adenine in position 1618 of 23S rRNA. The protein is Ribosomal RNA large subunit methyltransferase F of Pseudoalteromonas atlantica (strain T6c / ATCC BAA-1087).